The primary structure comprises 142 residues: Large ribosomal subunit protein uL13 (142 aa).

This sequence belongs to the universal ribosomal protein uL13 family. In terms of assembly, part of the 50S ribosomal subunit.

In terms of biological role, this protein is one of the early assembly proteins of the 50S ribosomal subunit, although it is not seen to bind rRNA by itself. It is important during the early stages of 50S assembly. This chain is Large ribosomal subunit protein uL13, found in Acidithiobacillus ferrooxidans (strain ATCC 23270 / DSM 14882 / CIP 104768 / NCIMB 8455) (Ferrobacillus ferrooxidans (strain ATCC 23270)).